The sequence spans 257 residues: Triosephosphate isomerase (257 aa).

Substrate is bound by residues asparagine 12 and lysine 14. The Electrophile role is filled by histidine 98. The Proton acceptor role is filled by glutamate 169.

Belongs to the triosephosphate isomerase family. Homodimer.

It catalyses the reaction D-glyceraldehyde 3-phosphate = dihydroxyacetone phosphate. It participates in carbohydrate biosynthesis; gluconeogenesis. The protein operates within carbohydrate degradation; glycolysis; D-glyceraldehyde 3-phosphate from glycerone phosphate: step 1/1. The polypeptide is Triosephosphate isomerase (tpiA) (Dictyostelium discoideum (Social amoeba)).